The chain runs to 874 residues: Mannuronan C5-epimerase AlgE6 (874 aa).

PbH1 repeat units lie at residues Asp-133 to Glu-155, Thr-157 to Tyr-179, Gln-180 to Thr-202, Thr-204 to Arg-226, Pro-234 to Met-256, Ser-257 to Gly-279, Ala-280 to Val-302, and Thr-320 to Ser-351. Hemolysin-type calcium-binding repeat units lie at residues Gly-383–Asp-394, Gly-401–Leu-417, Gly-419–Phe-435, Gly-562–Leu-578, Gly-580–Phe-596, Gly-723–Leu-739, and Gly-741–Phe-757. The disordered stretch occupies residues Gly-401–Gly-420.

Belongs to the D-mannuronate C5-epimerase family. Requires Ca(2+) as cofactor.

It is found in the secreted. It catalyses the reaction [(1-&gt;4)-beta-D-mannuronosyl](n) = [alginate](n). The protein operates within glycan biosynthesis; alginate biosynthesis. With respect to regulation, inhibited by zinc. In terms of biological role, converts beta-D-mannuronic acid (M) to alpha-L-guluronic acid (G), producing a polymer with gel-forming capacity, required for the formation of the cyst coat. The chain is Mannuronan C5-epimerase AlgE6 from Azotobacter vinelandii.